The sequence spans 405 residues: Argininosuccinate synthase (405 aa).

Residues Ala11 to Ser19 and Ala38 each bind ATP. 2 residues coordinate L-citrulline: Tyr91 and Ser96. Residue Gly121 coordinates ATP. L-aspartate contacts are provided by Thr123, Asn127, and Asp128. Asn127 contributes to the L-citrulline binding site. L-citrulline-binding residues include Arg131, Ser181, Ser190, Glu266, and Tyr278.

The protein belongs to the argininosuccinate synthase family. Type 1 subfamily. In terms of assembly, homotetramer.

It localises to the cytoplasm. It catalyses the reaction L-citrulline + L-aspartate + ATP = 2-(N(omega)-L-arginino)succinate + AMP + diphosphate + H(+). Its pathway is amino-acid biosynthesis; L-arginine biosynthesis; L-arginine from L-ornithine and carbamoyl phosphate: step 2/3. This is Argininosuccinate synthase from Nitratiruptor sp. (strain SB155-2).